Consider the following 457-residue polypeptide: ATP synthase subunit beta (457 aa).

150–157 (GGAGVGKT) contributes to the ATP binding site.

Belongs to the ATPase alpha/beta chains family. In terms of assembly, F-type ATPases have 2 components, CF(1) - the catalytic core - and CF(0) - the membrane proton channel. CF(1) has five subunits: alpha(3), beta(3), gamma(1), delta(1), epsilon(1). CF(0) has three main subunits: a(1), b(2) and c(9-12). The alpha and beta chains form an alternating ring which encloses part of the gamma chain. CF(1) is attached to CF(0) by a central stalk formed by the gamma and epsilon chains, while a peripheral stalk is formed by the delta and b chains.

It localises to the cell membrane. The catalysed reaction is ATP + H2O + 4 H(+)(in) = ADP + phosphate + 5 H(+)(out). In terms of biological role, produces ATP from ADP in the presence of a proton gradient across the membrane. The catalytic sites are hosted primarily by the beta subunits. The polypeptide is ATP synthase subunit beta (Baumannia cicadellinicola subsp. Homalodisca coagulata).